The following is a 460-amino-acid chain: MAGGGGGGGGEGPRQLDQTPTWAVSTVCGVIILISIILELIIHKVGEVFERKKKKALFEALEKIKNELMVLGFISLLLTFGQNYIASICVPSRYGHAMSFCGPYDGPSEDDRKKLKKTDHAMRILYSVQRRSLADAPPVNCKKDYVALISLNALHQVHIFIFFLAVFHVIYSAITMMLGRAKIRGWKVWEQEVIHEQEMMNDPSRFRLTHETSFVREHVNSWASNKFFFYVMCFFRQILRSVRKSDYLTMRHGFISVHLAPGMKFDFQKYIKRSLEDDFKVVVGIRPELWAFVMLFLLFDVHGWYVTAVITMIPPLLTLAIGTKLQAIISYMALEIQERHAVIQGMPVVNVSDQHFWFEKPDLVLHMIHFVLFQNAFEITYFFWIWYEFGLRSCFHHHFGLIIIRVCLGVGVQFLCSYITLPLYALVTQMGSTMKRSVFDEQTSKALEQWHKKARKKNEK.

Over 1–21 the chain is Extracellular; sequence MAGGGGGGGGEGPRQLDQTPT. The chain crosses the membrane as a helical span at residues 22-42; it reads WAVSTVCGVIILISIILELII. Over 43–67 the chain is Cytoplasmic; the sequence is HKVGEVFERKKKKALFEALEKIKNE. Residues 68–88 traverse the membrane as a helical segment; it reads LMVLGFISLLLTFGQNYIASI. Residues 89–158 lie on the Extracellular side of the membrane; sequence CVPSRYGHAM…ISLNALHQVH (70 aa). A helical transmembrane segment spans residues 159–179; the sequence is IFIFFLAVFHVIYSAITMMLG. Residues 180-289 are Cytoplasmic-facing; that stretch reads RAKIRGWKVW…KVVVGIRPEL (110 aa). The helical transmembrane segment at 290–310 threads the bilayer; it reads WAFVMLFLLFDVHGWYVTAVI. Residues 311–315 are Extracellular-facing; the sequence is TMIPP. Residues 316 to 336 form a helical membrane-spanning segment; the sequence is LLTLAIGTKLQAIISYMALEI. The Cytoplasmic segment spans residues 337–366; that stretch reads QERHAVIQGMPVVNVSDQHFWFEKPDLVLH. A helical transmembrane segment spans residues 367-387; it reads MIHFVLFQNAFEITYFFWIWY. Residues 388-398 are Extracellular-facing; that stretch reads EFGLRSCFHHH. A helical membrane pass occupies residues 399–419; sequence FGLIIIRVCLGVGVQFLCSYI. Residues 420 to 460 are Cytoplasmic-facing; that stretch reads TLPLYALVTQMGSTMKRSVFDEQTSKALEQWHKKARKKNEK. The interval 441 to 460 is calmodulin-binding; sequence EQTSKALEQWHKKARKKNEK.

Belongs to the MLO family.

The protein localises to the membrane. May be involved in modulation of pathogen defense and leaf cell death. Activity seems to be regulated by Ca(2+)-dependent calmodulin binding and seems not to require heterotrimeric G proteins. This chain is MLO-like protein 9 (MLO9), found in Arabidopsis thaliana (Mouse-ear cress).